A 261-amino-acid chain; its full sequence is Putative [LysW]-aminoadipate/[LysW]-glutamate kinase (261 aa).

Substrate is bound by residues 35 to 36 (GG), arginine 62, and asparagine 162.

This sequence belongs to the acetylglutamate kinase family. LysZ subfamily.

The protein resides in the cytoplasm. The catalysed reaction is [amino-group carrier protein]-C-terminal-N-(1,4-dicarboxybutan-1-yl)-L-glutamine + ATP = [amino-group carrier protein]-C-terminal-N-(1-carboxy-5-phosphooxy-5-oxopentan-1-yl)-L-glutamine + ADP. It carries out the reaction [amino-group carrier protein]-C-terminal-gamma-(L-glutamyl)-L-glutamate + ATP = [amino-group carrier protein]-C-terminal-gamma-(5-phospho-L-glutamyl)-L-glutamate + ADP. Its pathway is amino-acid biosynthesis; L-lysine biosynthesis via AAA pathway; L-lysine from L-alpha-aminoadipate (Thermus route): step 2/5. It participates in amino-acid biosynthesis; L-arginine biosynthesis. In terms of biological role, involved in both the arginine and lysine biosynthetic pathways. Phosphorylates the LysW-bound precursors glutamate (for arginine biosynthesis), respectively alpha-aminoadipate (for lysine biosynthesis). The chain is Putative [LysW]-aminoadipate/[LysW]-glutamate kinase from Pyrobaculum islandicum (strain DSM 4184 / JCM 9189 / GEO3).